The chain runs to 428 residues: Probable methanogen homoaconitase large subunit (428 aa).

[4Fe-4S] cluster contacts are provided by Cys-304, Cys-364, and Cys-367.

This sequence belongs to the aconitase/IPM isomerase family. LeuC type 2 subfamily. In terms of assembly, heterotetramer of 2 HacA and 2 HacB proteins.

It carries out the reaction (2R)-homocitrate = (2R,3S)-homoisocitrate. It catalyses the reaction (2R)-homocitrate = cis-homoaconitate + H2O. The enzyme catalyses (2R,3S)-homoisocitrate = cis-homoaconitate + H2O. The catalysed reaction is cis-(homo)2aconitate + H2O = (2R,3S)-iso(homo)2citrate. It carries out the reaction cis-(homo)3aconitate + H2O = (2R,3S)-iso(homo)3citrate. The protein operates within organic acid metabolism; 2-oxosuberate biosynthesis. Its function is as follows. Component of a hydro-lyase with broad substrate specificity for cis-unsaturated tricarboxylic acids. Catalyzes both the reversible dehydration of (R)-homocitrate ((R)-2-hydroxybutane-1,2,4-tricarboxylate) to produce cis-homoaconitate ((Z)-but-1-ene-1,2,4-tricarboxylate), and its hydration to homoisocitrate ((1R,2S)-1-hydroxybutane-1,2,4-tricarboxylate). Is also able to hydrate the analogous longer chain substrates cis-homo(2)-aconitate, cis-homo(3)-aconitate. These reactions are part of the biosynthesis pathway of coenzyme B. In Methanothermobacter thermautotrophicus (strain ATCC 29096 / DSM 1053 / JCM 10044 / NBRC 100330 / Delta H) (Methanobacterium thermoautotrophicum), this protein is Probable methanogen homoaconitase large subunit (hacA).